Here is a 437-residue protein sequence, read N- to C-terminus: Elongation factor 1-gamma-B (437 aa).

The 86-residue stretch at 2–87 (AGGTLYTYPD…YVANDELRGS (86 aa)) folds into the GST N-terminal domain. The GST C-terminal domain maps to 89–222 (NRLHQAQVIQ…KMAQFDAKKF (134 aa)). A compositionally biased stretch (basic and acidic residues) spans 225–240 (VQPKKETPKKEKPAKE). The interval 225 to 279 (VQPKKETPKKEKPAKEPKKKKKKKKKATPAPAPAPEDDLDESEKALAAEPKSKDP) is disordered. Positions 241-251 (PKKKKKKKKKA) are enriched in basic residues. The span at 266–279 (SEKALAAEPKSKDP) shows a compositional bias: basic and acidic residues. Positions 276–437 (SKDPYAHLPK…KAFNQGKIFK (162 aa)) constitute an EF-1-gamma C-terminal domain.

In terms of assembly, EF-1 is composed of four subunits: alpha, beta, delta, and gamma.

Its function is as follows. Probably plays a role in anchoring the complex to other cellular components. This chain is Elongation factor 1-gamma-B (eef1g-b), found in Xenopus laevis (African clawed frog).